We begin with the raw amino-acid sequence, 469 residues long: Citrate synthase, mitochondrial (469 aa).

The transit peptide at 1-33 directs the protein to the mitochondrion; that stretch reads MAPVMRLGSAALRSSIHLTSRQTAFTAARCYSS. H352 is an active-site residue.

It belongs to the citrate synthase family.

It is found in the mitochondrion matrix. It carries out the reaction oxaloacetate + acetyl-CoA + H2O = citrate + CoA + H(+). Its pathway is carbohydrate metabolism; tricarboxylic acid cycle; isocitrate from oxaloacetate: step 1/2. The sequence is that of Citrate synthase, mitochondrial (cit-1) from Neurospora crassa (strain ATCC 24698 / 74-OR23-1A / CBS 708.71 / DSM 1257 / FGSC 987).